We begin with the raw amino-acid sequence, 394 residues long: Putative pectate lyase 17 (394 aa).

Residues 1-22 form the signal peptide; that stretch reads MTHFTVSCLLVALFLCQSLVHA. Ca(2+) contacts are provided by Asp-192, Asp-216, and Asp-220. Arg-272 is an active-site residue.

The protein belongs to the polysaccharide lyase 1 family. Ca(2+) is required as a cofactor.

It catalyses the reaction Eliminative cleavage of (1-&gt;4)-alpha-D-galacturonan to give oligosaccharides with 4-deoxy-alpha-D-galact-4-enuronosyl groups at their non-reducing ends.. Its pathway is glycan metabolism; pectin degradation; 2-dehydro-3-deoxy-D-gluconate from pectin: step 2/5. This is Putative pectate lyase 17 from Arabidopsis thaliana (Mouse-ear cress).